We begin with the raw amino-acid sequence, 243 residues long: Probable transcriptional regulatory protein PTH_1024 (243 aa).

It belongs to the TACO1 family.

It localises to the cytoplasm. In Pelotomaculum thermopropionicum (strain DSM 13744 / JCM 10971 / SI), this protein is Probable transcriptional regulatory protein PTH_1024.